Here is a 273-residue protein sequence, read N- to C-terminus: 4-hydroxy-tetrahydrodipicolinate reductase (273 aa).

Residue glycine 11–methionine 16 participates in NAD(+) binding. NADP(+) is bound at residue arginine 37. NAD(+)-binding positions include glycine 100 to threonine 102 and alanine 124 to tyrosine 127. The active-site Proton donor/acceptor is histidine 157. Residue histidine 158 coordinates (S)-2,3,4,5-tetrahydrodipicolinate. Lysine 161 serves as the catalytic Proton donor. Glycine 167 to threonine 168 contacts (S)-2,3,4,5-tetrahydrodipicolinate.

The protein belongs to the DapB family.

It is found in the cytoplasm. The catalysed reaction is (S)-2,3,4,5-tetrahydrodipicolinate + NAD(+) + H2O = (2S,4S)-4-hydroxy-2,3,4,5-tetrahydrodipicolinate + NADH + H(+). It carries out the reaction (S)-2,3,4,5-tetrahydrodipicolinate + NADP(+) + H2O = (2S,4S)-4-hydroxy-2,3,4,5-tetrahydrodipicolinate + NADPH + H(+). It participates in amino-acid biosynthesis; L-lysine biosynthesis via DAP pathway; (S)-tetrahydrodipicolinate from L-aspartate: step 4/4. Functionally, catalyzes the conversion of 4-hydroxy-tetrahydrodipicolinate (HTPA) to tetrahydrodipicolinate. The chain is 4-hydroxy-tetrahydrodipicolinate reductase from Acinetobacter baumannii (strain AB307-0294).